Consider the following 209-residue polypeptide: MLINIEGIQAFCQTIRNPRRIIPHATFPTFSQIPCNINYFLEQKFQVPVDIRALVLDKDNCITLPNETTIAEAELKKIREFQNIYGEKNVILLSNSIGTRKLDPTGELAAHFQQKWNIPVVRHSKLKPLCTEELYTYLSNNSHVSSASQILFIGDRLLTDITLANIMGSWGVWLTRGVGNTTNMMMEVESWLYKRIHTQNPYIPTNRKS.

The Phosphoryl acceptor signature appears at 57-61; sequence DKDNC.

The protein belongs to the GEP4 family.

The protein localises to the mitochondrion inner membrane. The enzyme catalyses a 1,2-diacyl-sn-glycero-3-phospho-(1'-sn-glycero-3'-phosphate) + H2O = a 1,2-diacyl-sn-glycero-3-phospho-(1'-sn-glycerol) + phosphate. Its pathway is phospholipid metabolism; phosphatidylglycerol biosynthesis; phosphatidylglycerol from CDP-diacylglycerol: step 2/2. Functionally, phosphatidylglycerophosphatase involved in the biosynthesis of cardiolipin (CL), a unique dimeric phosphoglycerolipid predominantly present in mitochondrial membranes and which has important functions for cellular energy metabolism, mitochondrial dynamics and the initiation of apoptotic pathways. This is Probable phosphatidylglycerophosphatase, mitochondrial (gep4) from Schizosaccharomyces pombe (strain 972 / ATCC 24843) (Fission yeast).